A 165-amino-acid polypeptide reads, in one-letter code: MNYKGKAHKVGEHIDTDAIIPARFLVTTDAQKLGENCMSGLEPSWASRVAPGDIMVAGRNFGCGSSREHAPIAILGAGMPVVIGHSFARIFYRNAFNMGLLLMEVGDEVDKISDGDALEIDASTGAIRNLTTGAEITCPPLPASMAAILAKGGLVGYVKERLAQV.

It belongs to the LeuD family. LeuD type 2 subfamily. Heterodimer of LeuC and LeuD.

It carries out the reaction (2R,3S)-3-isopropylmalate = (2S)-2-isopropylmalate. It participates in amino-acid biosynthesis; L-leucine biosynthesis; L-leucine from 3-methyl-2-oxobutanoate: step 2/4. Functionally, catalyzes the isomerization between 2-isopropylmalate and 3-isopropylmalate, via the formation of 2-isopropylmaleate. This chain is 3-isopropylmalate dehydratase small subunit, found in Desulfovibrio desulfuricans (strain ATCC 27774 / DSM 6949 / MB).